The chain runs to 63 residues: Large ribosomal subunit protein uL29 (63 aa).

The protein belongs to the universal ribosomal protein uL29 family.

The chain is Large ribosomal subunit protein uL29 from Listeria innocua serovar 6a (strain ATCC BAA-680 / CLIP 11262).